A 101-amino-acid polypeptide reads, in one-letter code: Protein snet-1 (101 aa).

An N-terminal signal peptide occupies residues 1–20 (MARFTPLLMILLALVPLYYS).

May be degraded by the nep-2 peptidase. As to expression, expressed in coelomocytes, the ASK sensory neurons and interneurons AIB, AIM and PVQ.

The protein localises to the secreted. Its subcellular location is the perikaryon. Negatively regulates chemotaxis and olfactory plasticity which is the change from positive chemotaxis to dispersal after prolonged exposure to an odorant. May be down-regulated in response to pheromone exposure, resulting in promotion of olfactory plasticity. The sequence is that of Protein snet-1 from Caenorhabditis elegans.